The sequence spans 918 residues: Bromodomain testis-specific protein (918 aa).

The tract at residues 1–26 (MSDVKPPQHFTMNGNPPPPEFKNPKK) is disordered. Residues 29 to 135 (RLTNHLQYIE…KLFLEKVAEM (107 aa)) form the Bromo 1 domain. Residues 204–215 (NGVKRKADTTTP) carry the Nuclear localization signal motif. Disordered regions lie at residues 241–267 (RGSGRPIKPPCKDLPESPPQHQVGRRT), 379–430 (EPKN…RAHR), 575–712 (KNKP…SLVS), 738–764 (IPPLLSPLTSPSAAMPATGSQSTSSSQ), and 862–899 (DTPKAPEPSSVLQNSVDREREMARKREQERRRREAMSG). The 110-residue stretch at 267–376 (TKLSERLKYC…DVFEFRFSKI (110 aa)) folds into the Bromo 2 domain. Low complexity predominate over residues 399–416 (SPSSSESSDSESSSPENS). The stretch at 426–452 (ERAHRLASLEEQQLKAVREQLQLLTQT) forms a coiled coil. An NET domain is found at 496 to 578 (DSEEEMNTLP…GCLRKKKNKP (83 aa)). The span at 575 to 584 (KNKPPKKSKI) shows a compositional bias: basic residues. Positions 605–617 (KIETDGEIKDTTH) are enriched in basic and acidic residues. Composition is skewed to low complexity over residues 622 to 648 (SDSSSSSSSSDSSSSDSSSSDSCDSDS) and 739 to 764 (PPLLSPLTSPSAAMPATGSQSTSSSQ). Residues 815-902 (EKELTTASRG…RREAMSGVID (88 aa)) are a coiled coil. Residues 877–896 (VDREREMARKREQERRRREA) show a composition bias toward basic and acidic residues.

It belongs to the BET family.

The protein resides in the nucleus. Functionally, testis-specific chromatin protein that specifically binds histone H4 acetylated at 'Lys-5' and 'Lys-8' (H4K5ac and H4K8ac, respectively) and plays a key role in spermatogenesis. Required in late pachytene spermatocytes: plays a role in meiotic and post-meiotic cells by binding to acetylated histones at the promoter of specific meiotic and post-meiotic genes, facilitating their activation at the appropriate time. In the post-meiotic phase of spermatogenesis, binds to hyperacetylated histones and participates in their general removal from DNA. Also recognizes and binds a subset of butyrylated histones: able to bind histone H4 butyrylated at 'Lys-8' (H4K8ac), while it is not able to bind H4 butyrylated at 'Lys-5' (H4K5ac). The polypeptide is Bromodomain testis-specific protein (brdt) (Danio rerio (Zebrafish)).